The primary structure comprises 496 residues: GTPase Der (496 aa).

EngA-type G domains lie at 3-166 (PVIA…VGKF) and 209-382 (VKLA…TCAT). GTP is bound by residues 9–16 (GRPNVGKS), 56–60 (DTGGI), 118–121 (NKTD), 215–222 (GRPNVGKS), 262–266 (DTAGV), and 327–330 (NKWD). The KH-like domain maps to 383–467 (RRVGTSMLTR…PIRIQFKEGE (85 aa)).

This sequence belongs to the TRAFAC class TrmE-Era-EngA-EngB-Septin-like GTPase superfamily. EngA (Der) GTPase family. In terms of assembly, associates with the 50S ribosomal subunit.

Functionally, GTPase that plays an essential role in the late steps of ribosome biogenesis. This chain is GTPase Der, found in Proteus mirabilis (strain HI4320).